Here is a 124-residue protein sequence, read N- to C-terminus: Small ribosomal subunit protein bS6 (124 aa).

The disordered stretch occupies residues 97 to 124 (TGPSPMMKEVQREEAKKAAAAQPTEAQA). Over residues 114 to 124 (AAAAQPTEAQA) the composition is skewed to low complexity.

It belongs to the bacterial ribosomal protein bS6 family.

Binds together with bS18 to 16S ribosomal RNA. The sequence is that of Small ribosomal subunit protein bS6 from Paraburkholderia phymatum (strain DSM 17167 / CIP 108236 / LMG 21445 / STM815) (Burkholderia phymatum).